Reading from the N-terminus, the 189-residue chain is dTTP/UTP pyrophosphatase (189 aa).

The active-site Proton acceptor is D70.

It belongs to the Maf family. YhdE subfamily. A divalent metal cation serves as cofactor.

Its subcellular location is the cytoplasm. The enzyme catalyses dTTP + H2O = dTMP + diphosphate + H(+). The catalysed reaction is UTP + H2O = UMP + diphosphate + H(+). In terms of biological role, nucleoside triphosphate pyrophosphatase that hydrolyzes dTTP and UTP. May have a dual role in cell division arrest and in preventing the incorporation of modified nucleotides into cellular nucleic acids. This is dTTP/UTP pyrophosphatase from Akkermansia muciniphila (strain ATCC BAA-835 / DSM 22959 / JCM 33894 / BCRC 81048 / CCUG 64013 / CIP 107961 / Muc).